The chain runs to 441 residues: Ribosomal protein uS12 methylthiotransferase RimO (441 aa).

An MTTase N-terminal domain is found at 8 to 118 (PKIGFVSLGC…VLEHVHHYVP (111 aa)). 6 residues coordinate [4Fe-4S] cluster: Cys-17, Cys-53, Cys-82, Cys-150, Cys-154, and Cys-157. One can recognise a Radical SAM core domain in the interval 136-373 (LTPRHYAYLK…MQLQQQISAE (238 aa)). The 66-residue stretch at 376 to 441 (QEKVGREILV…DEYDLWGSRV (66 aa)) folds into the TRAM domain.

The protein belongs to the methylthiotransferase family. RimO subfamily. [4Fe-4S] cluster serves as cofactor.

The protein resides in the cytoplasm. It carries out the reaction L-aspartate(89)-[ribosomal protein uS12]-hydrogen + (sulfur carrier)-SH + AH2 + 2 S-adenosyl-L-methionine = 3-methylsulfanyl-L-aspartate(89)-[ribosomal protein uS12]-hydrogen + (sulfur carrier)-H + 5'-deoxyadenosine + L-methionine + A + S-adenosyl-L-homocysteine + 2 H(+). In terms of biological role, catalyzes the methylthiolation of an aspartic acid residue of ribosomal protein uS12. The polypeptide is Ribosomal protein uS12 methylthiotransferase RimO (Escherichia coli (strain UTI89 / UPEC)).